Here is a 317-residue protein sequence, read N- to C-terminus: uncharacterized protein (317 aa).

This is an uncharacterized protein from Schizosaccharomyces pombe (strain 972 / ATCC 24843) (Fission yeast).